The chain runs to 356 residues: Holliday junction branch migration complex subunit RuvB (356 aa).

Polar residues predominate over residues 1–14; it reads MAIVSSITNHSSLP. The interval 1–20 is disordered; sequence MAIVSSITNHSSLPNDKGEE. Positions 13–201 are large ATPase domain (RuvB-L); it reads LPNDKGEERL…FGITQRLDFY (189 aa). ATP-binding residues include Leu-40, Arg-41, Gly-82, Lys-85, Thr-86, Thr-87, Arg-191, Tyr-201, and Arg-238. Thr-86 contributes to the Mg(2+) binding site. A small ATPAse domain (RuvB-S) region spans residues 202-273; sequence NYLDLENIIK…VVNDALDLHR (72 aa). Positions 276–356 are head domain (RuvB-H); it reads QRGLDATDRS…LLTSPNNIDK (81 aa). 2 residues coordinate DNA: Arg-331 and Arg-336.

The protein belongs to the RuvB family. In terms of assembly, homohexamer. Forms an RuvA(8)-RuvB(12)-Holliday junction (HJ) complex. HJ DNA is sandwiched between 2 RuvA tetramers; dsDNA enters through RuvA and exits via RuvB. An RuvB hexamer assembles on each DNA strand where it exits the tetramer. Each RuvB hexamer is contacted by two RuvA subunits (via domain III) on 2 adjacent RuvB subunits; this complex drives branch migration. In the full resolvosome a probable DNA-RuvA(4)-RuvB(12)-RuvC(2) complex forms which resolves the HJ.

It localises to the cytoplasm. It catalyses the reaction ATP + H2O = ADP + phosphate + H(+). Functionally, the RuvA-RuvB-RuvC complex processes Holliday junction (HJ) DNA during genetic recombination and DNA repair, while the RuvA-RuvB complex plays an important role in the rescue of blocked DNA replication forks via replication fork reversal (RFR). RuvA specifically binds to HJ cruciform DNA, conferring on it an open structure. The RuvB hexamer acts as an ATP-dependent pump, pulling dsDNA into and through the RuvAB complex. RuvB forms 2 homohexamers on either side of HJ DNA bound by 1 or 2 RuvA tetramers; 4 subunits per hexamer contact DNA at a time. Coordinated motions by a converter formed by DNA-disengaged RuvB subunits stimulates ATP hydrolysis and nucleotide exchange. Immobilization of the converter enables RuvB to convert the ATP-contained energy into a lever motion, pulling 2 nucleotides of DNA out of the RuvA tetramer per ATP hydrolyzed, thus driving DNA branch migration. The RuvB motors rotate together with the DNA substrate, which together with the progressing nucleotide cycle form the mechanistic basis for DNA recombination by continuous HJ branch migration. Branch migration allows RuvC to scan DNA until it finds its consensus sequence, where it cleaves and resolves cruciform DNA. The sequence is that of Holliday junction branch migration complex subunit RuvB from Prochlorococcus marinus (strain NATL2A).